Here is a 213-residue protein sequence, read N- to C-terminus: MHQQKRQPELVEGNLPVFVFPTELIFYADDQSTHKQVLTLYNPYEFALKFKVLCTTPNKYVVIDAAGAVKPQCCVDIVIRHRDVRSCHYGVIDKFRLQVSEQSQRKALGRKEVIATLLPSAKEQQKEEEEKRIKEHLTESVFFEQSCQPENRAVSSGPSLLTVFLGVVCIAALMLPTLGDMESLVPLYLHLSVNQKLVAAYILGLITMAILRT.

The 128-residue stretch at 16 to 143 (PVFVFPTELI…KEHLTESVFF (128 aa)) folds into the MSP domain. 2 helical membrane-spanning segments follow: residues 159–179 (SLLT…PTLG) and 191–211 (LSVN…MAIL). The short motif at 205 to 208 (LITM) is the Nuclear export signal element.

It is found in the endoplasmic reticulum membrane. The protein resides in the golgi apparatus membrane. Functionally, plays a role in differentiation and/or proliferation of mesenchymal stem cells. Proposed to be involved in epithelial-to-mesenchymal transition (EMT). However, another study suggests that it is not required for EMT or stem cell self-renewal and acts during later stages of differentiation. The sequence is that of Motile sperm domain-containing protein 1 (Mospd1) from Rattus norvegicus (Rat).